The primary structure comprises 89 residues: Large ribosomal subunit protein bL27 (89 aa).

A disordered region spans residues 1 to 21 (MAHKKGASSSRNGRDSNAQRL). Positions 7–19 (ASSSRNGRDSNAQ) are enriched in polar residues.

This sequence belongs to the bacterial ribosomal protein bL27 family.

The chain is Large ribosomal subunit protein bL27 from Frankia alni (strain DSM 45986 / CECT 9034 / ACN14a).